We begin with the raw amino-acid sequence, 59 residues long: Cecropin-A2 (59 aa).

A signal peptide spans 1–23; it reads MNFNKLFAIVLLAALVLLGQTEA.

It belongs to the cecropin family.

The protein resides in the secreted. Functionally, cecropins have lytic and antibacterial activity against several Gram-positive and Gram-negative bacteria. This Aedes albopictus (Asian tiger mosquito) protein is Cecropin-A2 (CECA2).